A 196-amino-acid chain; its full sequence is MKVAVIKYNAGNIRSVDYALKRLGVEAVVTSDKEVLKAADKVIFPGVGEAETTMLHLKESGMDHFIKELRQPVLGICLGMQLMCRFSEEGNVDCLGIFDTDVKRFAPRKHEEKVPHMGWNTISCLKSDLFKGFTRDEFVYFVHSYYVPVSEFTAAETDYIRPFSAALHKDNFYATQFHPEKSGEAGERIIKNFLEL.

The 195-residue stretch at 2-196 (KVAVIKYNAG…ERIIKNFLEL (195 aa)) folds into the Glutamine amidotransferase type-1 domain. Cys-77 acts as the Nucleophile in catalysis. Active-site residues include His-178 and Glu-180.

As to quaternary structure, heterodimer of HisH and HisF.

Its subcellular location is the cytoplasm. It catalyses the reaction 5-[(5-phospho-1-deoxy-D-ribulos-1-ylimino)methylamino]-1-(5-phospho-beta-D-ribosyl)imidazole-4-carboxamide + L-glutamine = D-erythro-1-(imidazol-4-yl)glycerol 3-phosphate + 5-amino-1-(5-phospho-beta-D-ribosyl)imidazole-4-carboxamide + L-glutamate + H(+). It carries out the reaction L-glutamine + H2O = L-glutamate + NH4(+). It functions in the pathway amino-acid biosynthesis; L-histidine biosynthesis; L-histidine from 5-phospho-alpha-D-ribose 1-diphosphate: step 5/9. IGPS catalyzes the conversion of PRFAR and glutamine to IGP, AICAR and glutamate. The HisH subunit catalyzes the hydrolysis of glutamine to glutamate and ammonia as part of the synthesis of IGP and AICAR. The resulting ammonia molecule is channeled to the active site of HisF. The polypeptide is Imidazole glycerol phosphate synthase subunit HisH (Bacteroides fragilis (strain ATCC 25285 / DSM 2151 / CCUG 4856 / JCM 11019 / LMG 10263 / NCTC 9343 / Onslow / VPI 2553 / EN-2)).